Consider the following 445-residue polypeptide: Hydroxymethylglutaryl-CoA synthase (445 aa).

A (3S)-3-hydroxy-3-methylglutaryl-CoA-binding site is contributed by Asp-31. Residue Glu-83 is the Proton donor/acceptor of the active site. 7 residues coordinate (3S)-3-hydroxy-3-methylglutaryl-CoA: Cys-120, Thr-163, Ser-211, His-244, Lys-253, Asn-328, and Ser-364. Cys-120 functions as the Acyl-thioester intermediate in the catalytic mechanism. Residue His-244 is the Proton donor/acceptor of the active site.

Belongs to the thiolase-like superfamily. HMG-CoA synthase family.

It catalyses the reaction acetoacetyl-CoA + acetyl-CoA + H2O = (3S)-3-hydroxy-3-methylglutaryl-CoA + CoA + H(+). It functions in the pathway metabolic intermediate biosynthesis; (R)-mevalonate biosynthesis; (R)-mevalonate from acetyl-CoA: step 2/3. With respect to regulation, in contrast to bacterial and eukaryotic HMG-CoA synthases, is insensitive to feedback substrate inhibition by acetoacetyl-CoA. Enzymatic activity is inhibited by hymeglusin, which also blocks the propagation of H.volcanii cells in vivo, indicating the critical role that the mevalonate pathway plays in isoprenoid biosynthesis by these archaea. Functionally, catalyzes the condensation of acetyl-CoA with acetoacetyl-CoA to form 3-hydroxy-3-methylglutaryl-CoA (HMG-CoA). Functions in the mevalonate (MVA) pathway leading to isopentenyl diphosphate (IPP), a key precursor for the biosynthesis of isoprenoid compounds such as archaeal membrane lipids. The chain is Hydroxymethylglutaryl-CoA synthase (hmgB) from Haloferax volcanii (strain ATCC 29605 / DSM 3757 / JCM 8879 / NBRC 14742 / NCIMB 2012 / VKM B-1768 / DS2) (Halobacterium volcanii).